Reading from the N-terminus, the 381-residue chain is Heterogeneous nuclear rnp K-like protein 2 (381 aa).

The disordered stretch occupies residues 1 to 34 (MSQFFEAATPVAIPTNNTNGGSSDAGSAATGGAP). The span at 15 to 33 (TNNTNGGSSDAGSAATGGA) shows a compositional bias: low complexity. KH domains lie at 43–107 (TINH…IGDI), 156–221 (IGYV…LIEI), and 258–326 (NTRI…ESML). Residues 344 to 381 (LEAAEGDATVVTERSDSASFLEEKEEPQENHDNKEEQS) form a disordered region. Phosphoserine occurs at positions 358, 360, and 362. Over residues 370–381 (PQENHDNKEEQS) the composition is skewed to basic and acidic residues.

This sequence belongs to the HEK2 family. Binds RNA. In terms of processing, phosphorylated by the plasma membrane-Anchored casein kinase YCK1. Phosphorylation at its C-terminus reduces its RNA-binding capacity.

The protein localises to the cytoplasm. Its subcellular location is the P-body. It localises to the nucleus. It is found in the chromosome. The protein resides in the telomere. RNA-binding protein involved in the correct localization of transcripts in the cell. RNA localization is a widespread mechanism for achieving localized protein synthesis. Required for the asymmetric localization to the daughter cell nucleus of the ASH1 transcript, coding for a specific repressor of transcription. Overexpression inhibits translation of the ASH1 transcript. Involved in the stability of transcripts, like the MTL1 mRNA. Involved in structural and functional organization of telomeric chromatin and regulates silencing at the HMR locus. The polypeptide is Heterogeneous nuclear rnp K-like protein 2 (HEK2) (Saccharomyces cerevisiae (strain YJM789) (Baker's yeast)).